A 151-amino-acid polypeptide reads, in one-letter code: 3-dehydroquinate dehydratase (151 aa).

Catalysis depends on Y24, which acts as the Proton acceptor. 3 residues coordinate substrate: N76, H82, and D89. Catalysis depends on H102, which acts as the Proton donor. Residues 103–104 and R113 contribute to the substrate site; that span reads VS.

It belongs to the type-II 3-dehydroquinase family. As to quaternary structure, homododecamer.

It catalyses the reaction 3-dehydroquinate = 3-dehydroshikimate + H2O. It participates in metabolic intermediate biosynthesis; chorismate biosynthesis; chorismate from D-erythrose 4-phosphate and phosphoenolpyruvate: step 3/7. In terms of biological role, catalyzes a trans-dehydration via an enolate intermediate. The chain is 3-dehydroquinate dehydratase from Afipia carboxidovorans (strain ATCC 49405 / DSM 1227 / KCTC 32145 / OM5) (Oligotropha carboxidovorans).